The primary structure comprises 420 residues: Deoxyribodipyrimidine photo-lyase (420 aa).

Residues 2–124 (GPLLVWHRGD…PLHLLPAPHL (123 aa)) enclose the Photolyase/cryptochrome alpha/beta domain. The disordered stretch occupies residues 147-176 (APPLPPPEALPKGPEEGEIPREDPGLPLPE). Basic and acidic residues predominate over residues 159–170 (GPEEGEIPREDP). Tyr-197 provides a ligand contact to FAD. Arg-201 contributes to the DNA binding site. FAD is bound by residues 209 to 213 (GSRLS), Trp-241, Arg-248, Asn-310, and 341 to 343 (DGD). Interaction with DNA regions lie at residues 244–251 (ELLWRDFS) and 310–311 (NR). Residue Gln-373 participates in DNA binding.

The protein belongs to the DNA photolyase class-1 family. Monomer. The cofactor is FAD.

The catalysed reaction is cyclobutadipyrimidine (in DNA) = 2 pyrimidine residues (in DNA).. Its function is as follows. Involved in repair of UV radiation-induced DNA damage. Catalyzes the light-dependent monomerization (300-600 nm) of cyclobutyl pyrimidine dimers (in cis-syn configuration), which are formed between adjacent bases on the same DNA strand upon exposure to ultraviolet radiation. The chain is Deoxyribodipyrimidine photo-lyase (phr) from Thermus thermophilus (strain ATCC 27634 / DSM 579 / HB8).